The chain runs to 575 residues: MFGVQDTLARSGTALRDKALGVGMDPVRSWVRNVGVVDAKVAAQSGVAVSRAHFEKQPPSNLRKSNFFHFVLALYDRQGQPIEIERTAFVDFVENEKELSTEKTNNGTHYKLQLLYSNGVRTEQDLYVRLIDSVTKQPIAYEGQNKNPEMCRVLLTHEVMCSRCCEKKSCGNRNETPSDPVIIDRFFLKFFLKCNQNCLKTAGNPRDMRRFQVVLSTTVNVDGHVLAVSDNMFVHNNSKHGRRARRLDPSEATPCIKAISPSEGWTTGGAMVIIIGDNFFDGLQVVFGTMLVWSELITPHAIRVQTPPRHIPGVVEVTLSYKSKQFCKGAPGRFIYTALNEPTIDYGFQRLQKVIPRHPGDPERLAKEMLLKRAADLVEALYGTPHNNQDIILKRAADIAEALYSVPRNHNQIPALSSSPVHSGMMGINSYGGQLGVSISESQANNQGYIRNTSSISPRGYSSSSTPQQSNYSTPSNSMNGYSNVPMSNLGVPGSPGFINGSPTTSPYGIMPSSPPVGSSGSSSILPFSSSVFPSIKQKSAFAPVIRPQGSPSPACSSSNSNGFRAMTGLVVPPM.

The segment at 63–66 is interaction with DNA; it reads RKSN. The C5-type zinc-finger motif lies at 151 to 170; it reads CRVLLTHEVMCSRCCEKKSC. Interaction with DNA regions lie at residues 197–204 and 236–239; these read NCLKTAGN and NNSK. The region spanning 254-336 is the IPT/TIG domain; it reads PCIKAISPSE…CKGAPGRFIY (83 aa). The interval 450–487 is disordered; sequence IRNTSSISPRGYSSSSTPQQSNYSTPSNSMNGYSNVPM. Low complexity predominate over residues 454-476; that stretch reads SSISPRGYSSSSTPQQSNYSTPS. A compositionally biased stretch (polar residues) spans 477 to 487; the sequence is NSMNGYSNVPM.

This sequence belongs to the COE family.

The protein resides in the nucleus. May play a pivotal role in the transcriptional cascade that specifies primary neurons in embryos. Stabilizes the higher neural potential of selected progenitor cells that express neurog2/X-ngnr-1 by maintaining Delta-Notch signaling. Thus ensures the transition between neural competence and irreversible commitment to a neural fate. Also promotes neuronal differentiation by activating neurod1 expression, directly or indirectly. This Xenopus tropicalis (Western clawed frog) protein is Transcription factor coe2.